Consider the following 39-residue polypeptide: Photosystem II reaction center protein X (39 aa).

A helical transmembrane segment spans residues Trp-10 to Ile-30.

It belongs to the PsbX family. Type 1 subfamily. As to quaternary structure, PSII is composed of 1 copy each of membrane proteins PsbA, PsbB, PsbC, PsbD, PsbE, PsbF, PsbH, PsbI, PsbJ, PsbK, PsbL, PsbM, PsbT, PsbX, PsbY, PsbZ, Psb30/Ycf12, peripheral proteins PsbO, CyanoQ (PsbQ), PsbU, PsbV and a large number of cofactors. It forms dimeric complexes.

It localises to the cellular thylakoid membrane. Involved in the binding and/or turnover of quinones at the Q(B) site of photosystem II (PSII). PSII is a light-driven water plastoquinone oxidoreductase, using light energy to abstract electrons from H(2)O, generating a proton gradient subsequently used for ATP formation. This chain is Photosystem II reaction center protein X, found in Microcystis aeruginosa (strain NIES-843 / IAM M-2473).